Consider the following 152-residue polypeptide: Transcriptional repressor NrdR (152 aa).

The segment at 3-34 is a zinc-finger region; the sequence is CPFCHNEQSRVIDSRVIDSGTSIRRRRECAAC. In terms of domain architecture, ATP-cone spans 46–136; sequence LSVVKRNGLA…VYKSFESADD (91 aa).

This sequence belongs to the NrdR family. Zn(2+) serves as cofactor.

In terms of biological role, negatively regulates transcription of bacterial ribonucleotide reductase nrd genes and operons by binding to NrdR-boxes. The polypeptide is Transcriptional repressor NrdR (Corynebacterium aurimucosum (strain ATCC 700975 / DSM 44827 / CIP 107346 / CN-1) (Corynebacterium nigricans)).